A 693-amino-acid polypeptide reads, in one-letter code: Sodium-dependent dopamine transporter (693 aa).

Topologically, residues 1-56 (MSEGRCSVAHMSSVVAPAKEANAMGPKAVELVLVKEQNGVQLTNSTLLNPPQSPTE) are cytoplasmic. Residues 57-95 (AQDRETWSKKADFLLSVIGFAVDLANVWRFPYLCYKNGG) traverse the membrane as a discontinuously helical segment. Positions 75, 77, 78, 79, and 82 each coordinate Na(+). Asp79 provides a ligand contact to dopamine. 2 helical membrane passes run 96–127 (GAFL…NREG) and 128–171 (AAGV…LSSF). Dopamine is bound by residues Ser149 and Gly153. At 172 to 233 (TTELPWTHCN…SQGIDDLGPP (62 aa)) the chain is on the extracellular side. Cysteines 180 and 189 form a disulfide. N-linked (GlcNAc...) asparagine glycans are attached at residues Asn181, Asn196, and Asn202. The next 2 membrane-spanning stretches (helical) occupy residues 234–253 (RWQL…FSLW) and 254–284 (KGVK…GITL). Residues 285-303 (PGAVDAIRAYLSVDFHRLC) are Extracellular-facing. The chain crosses the membrane as a discontinuously helical span at residues 304–332 (EASVWIDAAIQICFSLGVGLGVLIAFSSY). Position 314 (Gln314) interacts with chloride. Phe317 lines the dopamine pocket. Na(+)-binding residues include Ser318 and Asn350. Ser318 is a chloride binding site. A helical membrane pass occupies residues 333 to 373 (NKFTNNCYRDAIITTSVNSLTSFSSGFVVFSFLGYMAQKHS). Ser354 contacts chloride. Over 374–397 (VPIGDVAKDGPGLIFIIYPEALAT) the chain is Extracellular. A run of 3 helical transmembrane segments spans residues 398 to 439 (LPLS…QLLH), 440 to 463 (RHRE…CVTN), and 464 to 496 (GGIY…AWFY). Residues Leu415, Asp418, and Ser419 each coordinate Na(+). Dopamine contacts are provided by Ser419 and Ala420. Over 497–513 (GVWQFSDDIKQMTGRRP) the chain is Cytoplasmic. A helical membrane pass occupies residues 514-539 (SLYWRLCWKFVSPCFLLFVVVVSIAT). Residues 540–550 (FRPPHYGAYVF) are Extracellular-facing. The helical transmembrane segment at 551-580 (PEWATALGWAIAASSMSVVPIYAAYKLCSL) threads the bilayer. The interval 558-587 (GWAIAASSMSVVPIYAAYKLCSLPGSSREK) is interaction with TGFB1I1. The Cytoplasmic segment spans residues 581-693 (PGSSREKLAY…VESTGLCSVY (113 aa)).

The protein belongs to the sodium:neurotransmitter symporter (SNF) (TC 2.A.22) family. SLC6A3 subfamily. Monomer. Homooligomer; disulfide-linked. Interacts with PRKCABP and TGFB1I1. Interacts (via N-terminus) with SYNGR3 (via N-terminus). Interacts with SLC18A2. Interacts with TOR1A (ATP-bound); TOR1A regulates SLC6A3 subcellular location. Interacts with alpha-synuclein/SNCA. Interacts with SEPTIN4. In terms of tissue distribution, expressed in the neurons of the substantia nigra of the brain.

It is found in the cell membrane. The protein resides in the cell projection. The protein localises to the neuron projection. It localises to the axon. The enzyme catalyses dopamine(out) + chloride(out) + Na(+)(out) = dopamine(in) + chloride(in) + Na(+)(in). The catalysed reaction is (R)-noradrenaline(out) + chloride(out) + Na(+)(out) = (R)-noradrenaline(in) + chloride(in) + Na(+)(in). It carries out the reaction dopamine(out) + chloride(out) + 2 Na(+)(out) = dopamine(in) + chloride(in) + 2 Na(+)(in). With respect to regulation, inhibited by GBR 12909 dihydrochloride, amphetamine and cocaine. Inhibited by zinc ions. In terms of biological role, mediates sodium- and chloride-dependent transport of dopamine. Also mediates sodium- and chloride-dependent transport of norepinephrine (also known as noradrenaline). Regulator of light-dependent retinal hyaloid vessel regression, downstream of OPN5 signaling. This Bos taurus (Bovine) protein is Sodium-dependent dopamine transporter (SLC6A3).